Here is a 524-residue protein sequence, read N- to C-terminus: Probable beta-1,4-xylosyltransferase IRX14 (524 aa).

Topologically, residues 1–51 are cytoplasmic; the sequence is MMKSLLPQSQLRRSAAAASAARSSGGGAGSGGADGAGSDGGAGGRAPATST. Residues 21-41 form a disordered region; the sequence is ARSSGGGAGSGGADGAGSDGG. The span at 24–41 shows a compositional bias: gly residues; sequence SGGGAGSGGADGAGSDGG. The helical; Signal-anchor for type II membrane protein transmembrane segment at 52 to 71 threads the bilayer; the sequence is FWFLLHALCCLVSLFLGFRF. The Lumenal segment spans residues 72–524; that stretch reads SRLLFFLLFS…SRSTTKRKEN (453 aa). Asparagine 132, asparagine 135, asparagine 240, and asparagine 353 each carry an N-linked (GlcNAc...) asparagine glycan. The interval 492–524 is disordered; sequence AELVDSKQDQEGRRLSRTDRSSRSRSTTKRKEN. Residues 495-513 are compositionally biased toward basic and acidic residues; that stretch reads VDSKQDQEGRRLSRTDRSS.

The protein belongs to the glycosyltransferase 43 family.

The protein resides in the golgi apparatus membrane. In terms of biological role, probable beta-1,4-xylosyltransferase involved in xylan biosynthesis in cell walls. This Oryza sativa subsp. japonica (Rice) protein is Probable beta-1,4-xylosyltransferase IRX14.